The primary structure comprises 220 residues: UPF0319 protein YccT (220 aa).

An N-terminal signal peptide occupies residues 1–20; that stretch reads MKTGALATFLALCLPVTVFA.

The protein belongs to the UPF0319 family.

This Salmonella paratyphi A (strain ATCC 9150 / SARB42) protein is UPF0319 protein YccT.